A 374-amino-acid polypeptide reads, in one-letter code: Peptide chain release factor 2 (374 aa).

Residue Q249 is modified to N5-methylglutamine.

It belongs to the prokaryotic/mitochondrial release factor family. In terms of processing, methylated by PrmC. Methylation increases the termination efficiency of RF2.

The protein localises to the cytoplasm. In terms of biological role, peptide chain release factor 2 directs the termination of translation in response to the peptide chain termination codons UGA and UAA. This Ruegeria sp. (strain TM1040) (Silicibacter sp.) protein is Peptide chain release factor 2.